We begin with the raw amino-acid sequence, 510 residues long: NAD(P)H-quinone oxidoreductase subunit 2 B, chloroplastic (510 aa).

The next 14 helical transmembrane spans lie at 24 to 44 (LLLFHGSFIFPECILIFGLIL), 59 to 79 (WFYFISSTSLVISITALLFRW), 99 to 119 (IFQFLILLCSTLCIPLSVEYI), 124 to 144 (MAITEFLLFVLTATLGGMFLC), 149 to 169 (LITIFVALECFSLCSYLLSGY), 184 to 204 (LLMGGASSSILVYGFSWLYGL), 229 to 249 (ISIALIFITVGLGFKLSLAPF), 261 to 281 (PTPVVAFLSVTSKVAALALAT), 295 to 315 (WHLLLEILAILSMILGNLLAI), 323 to 343 (MLAYSSIGQIGYVIIGIIVGD), 354 to 374 (YMLFYISMNLGTFACIVLFGL), 395 to 415 (ALSLALCLLSLGGLPPLAGFF), 418 to 438 (LYLFWCGWQAGLYFLVSIGLL), and 484 to 504 (MTVCVIASTILGISMNPILAI).

This sequence belongs to the complex I subunit 2 family. In terms of assembly, NDH is composed of at least 16 different subunits, 5 of which are encoded in the nucleus.

The protein localises to the plastid. The protein resides in the chloroplast thylakoid membrane. The catalysed reaction is a plastoquinone + NADH + (n+1) H(+)(in) = a plastoquinol + NAD(+) + n H(+)(out). It catalyses the reaction a plastoquinone + NADPH + (n+1) H(+)(in) = a plastoquinol + NADP(+) + n H(+)(out). Functionally, NDH shuttles electrons from NAD(P)H:plastoquinone, via FMN and iron-sulfur (Fe-S) centers, to quinones in the photosynthetic chain and possibly in a chloroplast respiratory chain. The immediate electron acceptor for the enzyme in this species is believed to be plastoquinone. Couples the redox reaction to proton translocation, and thus conserves the redox energy in a proton gradient. The protein is NAD(P)H-quinone oxidoreductase subunit 2 B, chloroplastic of Zea mays (Maize).